The following is a 466-amino-acid chain: 3-isopropylmalate dehydratase large subunit (466 aa).

The [4Fe-4S] cluster site is built by Cys347, Cys407, and Cys410.

The protein belongs to the aconitase/IPM isomerase family. LeuC type 1 subfamily. In terms of assembly, heterodimer of LeuC and LeuD. [4Fe-4S] cluster is required as a cofactor.

It catalyses the reaction (2R,3S)-3-isopropylmalate = (2S)-2-isopropylmalate. It functions in the pathway amino-acid biosynthesis; L-leucine biosynthesis; L-leucine from 3-methyl-2-oxobutanoate: step 2/4. Catalyzes the isomerization between 2-isopropylmalate and 3-isopropylmalate, via the formation of 2-isopropylmaleate. This is 3-isopropylmalate dehydratase large subunit from Escherichia coli O157:H7.